A 320-amino-acid polypeptide reads, in one-letter code: Endolytic peptidoglycan transglycosylase RlpA (320 aa).

Belongs to the RlpA family.

Its function is as follows. Lytic transglycosylase with a strong preference for naked glycan strands that lack stem peptides. The protein is Endolytic peptidoglycan transglycosylase RlpA of Rickettsia prowazekii (strain Madrid E).